An 888-amino-acid chain; its full sequence is Microtubule-associated protein 10 (888 aa).

Disordered regions lie at residues 398 to 454 (EHKG…VTKG), 508 to 602 (SLAA…TSLR), 620 to 642 (NILR…DPAV), 654 to 683 (QVKA…ELQC), and 699 to 836 (TENN…YEPS). A compositionally biased stretch (polar residues) spans 524–541 (LTDSNGKVSSWAVQSQLP). Basic and acidic residues predominate over residues 572–589 (ESSRTREAKQSHAMKKET). Over residues 590–600 (VGQSENKTVTS) the composition is skewed to polar residues. Composition is skewed to polar residues over residues 661–683 (ADTN…ELQC), 699–714 (TENN…SSTG), 722–745 (SWAS…SSVF), 772–786 (EASS…SQWT), and 825–836 (ARTSQVSSYEPS).

As to quaternary structure, interacts (via middle region) with microtubules.

The protein resides in the cytoplasm. Its subcellular location is the cytoskeleton. The protein localises to the spindle pole. It localises to the microtubule organizing center. It is found in the centrosome. The protein resides in the midbody. Functionally, microtubule-associated protein (MAP) that plays a role in the regulation of cell division; promotes microtubule stability and participates in the organization of the spindle midzone and normal progress of cytokinesis. The polypeptide is Microtubule-associated protein 10 (Map10) (Rattus norvegicus (Rat)).